The sequence spans 648 residues: Macrolide export ATP-binding/permease protein MacB (648 aa).

Residues 5-243 enclose the ABC transporter domain; the sequence is LELKDIRRSY…AGGTEPVVNT (239 aa). 41-48 contributes to the ATP binding site; the sequence is GASGSGKS. The next 4 helical transmembrane spans lie at 273–293, 523–543, 576–596, and 600–620; these read LLTM…VVVG, LFLT…VMNI, AVLV…LIAF, and LFLP…AFLC.

This sequence belongs to the ABC transporter superfamily. Macrolide exporter (TC 3.A.1.122) family. As to quaternary structure, homodimer. Part of the tripartite efflux system MacAB-TolC, which is composed of an inner membrane transporter, MacB, a periplasmic membrane fusion protein, MacA, and an outer membrane component, TolC. The complex forms a large protein conduit and can translocate molecules across both the inner and outer membranes. Interacts with MacA.

It localises to the cell inner membrane. Its function is as follows. Part of the tripartite efflux system MacAB-TolC. MacB is a non-canonical ABC transporter that contains transmembrane domains (TMD), which form a pore in the inner membrane, and an ATP-binding domain (NBD), which is responsible for energy generation. Confers resistance against macrolides. This chain is Macrolide export ATP-binding/permease protein MacB, found in Shigella sonnei (strain Ss046).